The sequence spans 220 residues: Putative respiratory nitrate reductase subunit Rieske (220 aa).

A Rieske domain is found at 118-206 (KAPTLLVRHA…ITVSSEGYLI (89 aa)). The [2Fe-2S] cluster site is built by Cys151, His153, Cys168, and His171. Cys156 and Cys170 are joined by a disulfide.

In terms of assembly, probable multiprotein complex; a catalytic heterodimer of an alpha and beta chain is proposed to associate with additional subunits involved in membrane attachment and electron transfer. Requires [2Fe-2S] cluster as cofactor.

It localises to the cell membrane. Functionally, the respiratory membrane-bound nitrate reductase enzyme complex plays a role in generation of metabolic energy by using nitrate as a terminal electron acceptor during anaerobic conditions. Proposed Rieske subunit involved in a protonmotive Q-cycle mechanism-based electron transfer electrons to the beta subunit. In Haloferax mediterranei (strain ATCC 33500 / DSM 1411 / JCM 8866 / NBRC 14739 / NCIMB 2177 / R-4) (Halobacterium mediterranei), this protein is Putative respiratory nitrate reductase subunit Rieske (narB).